The following is a 375-amino-acid chain: Alcohol dehydrogenase class-3 chain L (375 aa).

An N-acetylalanine modification is found at A1. Zn(2+) is bound by residues C46, H68, C98, C101, C104, C112, and C175.

The protein belongs to the zinc-containing alcohol dehydrogenase family. Class-III subfamily. As to quaternary structure, homodimer or heterodimer with H chain. Zn(2+) is required as a cofactor.

It localises to the cytoplasm. The catalysed reaction is a primary alcohol + NAD(+) = an aldehyde + NADH + H(+). It catalyses the reaction a secondary alcohol + NAD(+) = a ketone + NADH + H(+). It carries out the reaction S-(hydroxymethyl)glutathione + NADP(+) = S-formylglutathione + NADPH + H(+). The enzyme catalyses S-(hydroxymethyl)glutathione + NAD(+) = S-formylglutathione + NADH + H(+). Its function is as follows. Class-III ADH is remarkably ineffective in oxidizing ethanol, but it readily catalyzes the oxidation of long-chain primary alcohols and the oxidation of S-(hydroxymethyl) glutathione. This chain is Alcohol dehydrogenase class-3 chain L, found in Gadus morhua (Atlantic cod).